The primary structure comprises 489 residues: UDP-N-acetylmuramoylalanine--D-glutamate ligase (489 aa).

126–132 lines the ATP pocket; sequence GTNGKTT.

It belongs to the MurCDEF family.

It is found in the cytoplasm. It catalyses the reaction UDP-N-acetyl-alpha-D-muramoyl-L-alanine + D-glutamate + ATP = UDP-N-acetyl-alpha-D-muramoyl-L-alanyl-D-glutamate + ADP + phosphate + H(+). It functions in the pathway cell wall biogenesis; peptidoglycan biosynthesis. Functionally, cell wall formation. Catalyzes the addition of glutamate to the nucleotide precursor UDP-N-acetylmuramoyl-L-alanine (UMA). The chain is UDP-N-acetylmuramoylalanine--D-glutamate ligase from Mycobacterium avium (strain 104).